The chain runs to 352 residues: C-C chemokine receptor type 5 (352 aa).

Topologically, residues Met1 to Ala30 are extracellular. A Sulfotyrosine modification is found at Tyr3. O-linked (GalNAc...) serine glycans are attached at residues Ser6 and Ser7. Sulfotyrosine is present on residues Tyr10 and Tyr14. 2 cysteine pairs are disulfide-bonded: Cys20–Cys269 and Cys101–Cys178. Residues Arg31 to Cys58 traverse the membrane as a helical segment. Over Lys59–Tyr68 the chain is Cytoplasmic. Residues Leu69–Tyr89 form a helical membrane-spanning segment. The Extracellular segment spans residues Ala90 to Gln102. The chain crosses the membrane as a helical span at residues Leu103 to Ile124. Residues Asp125–Thr141 are Cytoplasmic-facing. The chain crosses the membrane as a helical span at residues Val142–Phe166. The Extracellular segment spans residues Thr167–Ile198. A helical membrane pass occupies residues Val199–Leu218. The Cytoplasmic segment spans residues Lys219–Arg235. A helical membrane pass occupies residues Leu236–Phe260. The Extracellular segment spans residues Gln261–Gln277. Residues Ala278–Gly301 traverse the membrane as a helical segment. The Cytoplasmic portion of the chain corresponds to Glu302 to Leu352. S-palmitoyl cysteine attachment occurs at residues Cys321, Cys323, and Cys324. Residues Ser336, Ser337, Ser342, and Ser349 each carry the phosphoserine; by BARK1 modification.

It belongs to the G-protein coupled receptor 1 family. In terms of assembly, interacts with PRAF2. Efficient ligand binding to CCL3/MIP-1alpha and CCL4/MIP-1beta requires sulfation, O-glycosylation and sialic acid modifications. Glycosylation on Ser-6 is required for efficient binding of CCL4. Interacts with GRK2. Interacts with ARRB1 and ARRB2. Interacts with CNIH4. Interacts with S100A4; this interaction stimulates T-lymphocyte chemotaxis. Post-translationally, sulfated on at least 2 of the N-terminal tyrosines. Sulfation is required for efficient binding of the chemokines, CCL3 and CCL4. Palmitoylation in the C-terminal is important for cell surface expression. In terms of processing, phosphorylation on serine residues in the C-terminal is stimulated by binding CC chemokines especially by APO-RANTES. Post-translationally, O-glycosylated, but not N-glycosylated. Ser-6 appears to be the major site even if Ser-7 may be also O-glycosylated. Also sialylated glycans present which contribute to chemokine binding. Thr-16 and Ser-17 may also be glycosylated and, if so, with small moieties such as a T-antigen.

The protein resides in the cell membrane. Receptor for a number of inflammatory CC-chemokines including CCL3/MIP-1-alpha, CCL4/MIP-1-beta and RANTES and subsequently transduces a signal by increasing the intracellular calcium ion level. May play a role in the control of granulocytic lineage proliferation or differentiation. Participates in T-lymphocyte migration to the infection site by acting as a chemotactic receptor. The polypeptide is C-C chemokine receptor type 5 (CCR5) (Nomascus leucogenys (Northern white-cheeked gibbon)).